Reading from the N-terminus, the 124-residue chain is Small ribosomal subunit protein uS10 (124 aa).

The protein belongs to the universal ribosomal protein uS10 family.

This is Small ribosomal subunit protein uS10 (rps20) from Dictyostelium discoideum (Social amoeba).